The following is a 372-amino-acid chain: Queuine tRNA-ribosyltransferase (372 aa).

Residue Asp89 is the Proton acceptor of the active site. Substrate contacts are provided by residues 89–93 (DSGGF), Asp161, and Gly232. The RNA binding stretch occupies residues 262 to 268 (GIGDLPS). Catalysis depends on Asp281, which acts as the Nucleophile. Positions 286-290 (TKAAR) are RNA binding; important for wobble base 34 recognition. Residues Cys319, Cys321, Cys324, and His351 each coordinate Zn(2+).

It belongs to the queuine tRNA-ribosyltransferase family. In terms of assembly, homodimer. Within each dimer, one monomer is responsible for RNA recognition and catalysis, while the other monomer binds to the replacement base PreQ1. Zn(2+) serves as cofactor.

The catalysed reaction is 7-aminomethyl-7-carbaguanine + guanosine(34) in tRNA = 7-aminomethyl-7-carbaguanosine(34) in tRNA + guanine. It functions in the pathway tRNA modification; tRNA-queuosine biosynthesis. Catalyzes the base-exchange of a guanine (G) residue with the queuine precursor 7-aminomethyl-7-deazaguanine (PreQ1) at position 34 (anticodon wobble position) in tRNAs with GU(N) anticodons (tRNA-Asp, -Asn, -His and -Tyr). Catalysis occurs through a double-displacement mechanism. The nucleophile active site attacks the C1' of nucleotide 34 to detach the guanine base from the RNA, forming a covalent enzyme-RNA intermediate. The proton acceptor active site deprotonates the incoming PreQ1, allowing a nucleophilic attack on the C1' of the ribose to form the product. After dissociation, two additional enzymatic reactions on the tRNA convert PreQ1 to queuine (Q), resulting in the hypermodified nucleoside queuosine (7-(((4,5-cis-dihydroxy-2-cyclopenten-1-yl)amino)methyl)-7-deazaguanosine). In Chlamydia felis (strain Fe/C-56) (Chlamydophila felis), this protein is Queuine tRNA-ribosyltransferase.